Consider the following 313-residue polypeptide: Expansin-like A4 (313 aa).

Positions 1-30 (MDDNGDVHFCHRATAVVALLLLHLVVVANA) are cleaved as a signal peptide. The Expansin-like EG45 domain maps to 59–173 (GGACGFGAAP…RRIPCEYRES (115 aa)). Asparagine 124 is a glycosylation site (N-linked (GlcNAc...) asparagine). Positions 188 to 281 (THLAIRFLYQ…DWRPGEVYDT (94 aa)) constitute an Expansin-like CBD domain.

Belongs to the expansin family. Expansin-like A subfamily.

It is found in the secreted. This Oryza sativa subsp. japonica (Rice) protein is Expansin-like A4 (EXLA4).